Here is a 394-residue protein sequence, read N- to C-terminus: Envelope glycoprotein D (394 aa).

The signal sequence occupies residues 1-25 (MGGTAARLGAVILFVVIVGLHGVRG). The interaction with TNFRSF14 stretch occupies residues 25 to 57 (GKYALADASLKMADPNRFRGKDLPVLDQLTDPP). Residues 26 to 339 (KYALADASLK…PYHPPATPNN (314 aa)) are Virion surface-facing. H64 contacts Zn(2+). 3 disulfides stabilise this stretch: C91-C214, C131-C227, and C143-C152. N119 and N146 each carry an N-linked (GlcNAc...) asparagine; by host glycan. D240 contributes to the Zn(2+) binding site. The tract at residues 261–305 (LKIAGWHGPKAPYTSTLLPPELSETPNATQPELAPEDPEDSALLE) is profusion. Residues 275–301 (STLLPPELSETPNATQPELAPEDPEDS) are disordered. N287 carries an N-linked (GlcNAc...) asparagine; by host glycan. The chain crosses the membrane as a helical span at residues 340-364 (MGLIAGAVGGSLLAALVICGIVYWM). Over 365–394 (HRRTRKAPKRIRLPHIREDDQPSSHQPLFY) the chain is Intravirion.

The protein belongs to the herpesviridae glycoprotein D family. As to quaternary structure, homodimer. Interacts with host receptor TNFRSF14. Interacts with host receptor NECTIN1. Interacts (via profusion domain) with gB; this interaction occurs in the absence of gH/gL. Interacts (via profusion domain) with gH/gL heterodimer; this interaction occurs in the absence of gB. Associates with the gB-gH/gL-gD complex. Interacts (via C-terminus) with UL11 tegument protein. Interacts with host RSAD2.

It localises to the virion membrane. The protein localises to the host Golgi apparatus. Functionally, envelope glycoprotein that binds to the host cell entry receptors NECTIN1, TNFRSF14/HVEM and 3-O-sulfated heparan sulfate, promoting the virus entry into host cells. May trigger fusion with host membrane, by recruiting the fusion machinery composed of gB and gH/gL. The protein is Envelope glycoprotein D (gD) of Human herpesvirus 1 (strain Patton) (HHV-1).